A 362-amino-acid chain; its full sequence is MKLSALLALSASTAVLAAPAVHHSDNHHHNDKRAVVTVTQYVNADGAVVIPAANTATSAAADGKVESVAAATTTLSSTAAAATTSAAASSSSSSSSSSSSVGSGDFEDGTISCSDFPSGQGAVSLDWLGLGGWASIMDMNGNTATSCQDGYYCSYACSPGYAKTQWPSEQPSDGRSVGGLYCKNGKLYRSNTDTNSLCVEGQGSAQAVNKVSGSIAICGTDYPGSENMVVPTVVGAGSSQPINVIKEDSYYQWQGKKTSAQYYVNNAGVSVEDGCIWGTEGSGVGNWAPVVLGAGYTDGITYLSIIPNPNNKEAPNFNIKIVATDGSTVNGACSYENGVYSGSGSDGCTVSVTSGSANFVFY.

The first 17 residues, 1–17 (MKLSALLALSASTAVLA), serve as a signal peptide directing secretion.

It belongs to the SUN family.

The protein resides in the mitochondrion outer membrane. It is found in the secreted. Its subcellular location is the cell wall. Functionally, involved in aging, oxidative stress response, and in the regulation of mitochondrial biogenesis. Inactivation of UTH1 increases life span, leads to higher resistance to heat stress and to hydrogen peroxide, and increases sensitivity to the superoxide radical-generating drug paraquat and to copper. Also required for the selective autophagic degradation of mitochondria (mitophagy) in response to nitrogen starvation. May play a role in cell wall morphogenesis and septation. Involved in the remodeling of the cell wall during the various phases of yeast culture development and under various environmental conditions and plays a role in septation. Involved in cell sensitivity to boric acid. This Saccharomyces cerevisiae (strain YJM789) (Baker's yeast) protein is Probable secreted beta-glucosidase UTH1 (UTH1).